A 365-amino-acid chain; its full sequence is C-X-C chemokine receptor type 3 (365 aa).

Topologically, residues 1–57 (MVPEMSERQVFQASELTYLLENCSSSYDYAENESDSCCASPPCPQDISLNFDRAFLP) are extracellular. A glycan (N-linked (GlcNAc...) asparagine) is linked at Asn-22. 2 positions are modified to sulfotyrosine: Tyr-27 and Tyr-29. The N-linked (GlcNAc...) asparagine glycan is linked to Asn-32. The helical transmembrane segment at 58-78 (ALYGLLFLLGLLGNGAVAAVL) threads the bilayer. Topologically, residues 79-88 (CSQRAARTST) are cytoplasmic. Residues 89–109 (DTFLLHLAVADMLLVLTLPLW) traverse the membrane as a helical segment. The Extracellular segment spans residues 110–126 (RVDTAVQWVFGSGLCKV). Cys-124 and Cys-203 are disulfide-bonded. Residues 127-147 (AGALFNINFYAGALLLACISF) form a helical membrane-spanning segment. The Cytoplasmic portion of the chain corresponds to 148–169 (DRYLSIVHATQPYRRGPPARVT). Residues 170 to 190 (LTCVVVWGLCLFFAIPDFIFL) traverse the membrane as a helical segment. Over 191-223 (SANRDERLNAMHCRYNFPQVGRTALRGLQLVAG) the chain is Extracellular. The chain crosses the membrane as a helical span at residues 224–244 (FLLPLLVMAYCYARILAVLLV). The Cytoplasmic portion of the chain corresponds to 245 to 256 (SRGQRRQRRMRL). A helical transmembrane segment spans residues 257–277 (VVVVVVAFALCWTPYHLVVLV). Residues 278 to 301 (DTLMDLGALDRNCGRESRVDVAKS) lie on the Extracellular side of the membrane. A helical transmembrane segment spans residues 302–322 (VTSGLGYMHCCLNPLLYAFVG). The Cytoplasmic segment spans residues 323 to 365 (VKFRERMWMLLLRLGCPDHRGHQRHPTLSRRESSWSETPSTPR). A disordered region spans residues 342-365 (RGHQRHPTLSRRESSWSETPSTPR).

It belongs to the G-protein coupled receptor 1 family. As to quaternary structure, homomer. Forms heteromers with ACKR4. Interacts with PF4/CXCL4. Post-translationally, sulfation on Tyr-27 and Tyr-29 is essential for CXCL10 binding. N-glycosylated.

Its subcellular location is the cell membrane. Its function is as follows. Receptor for the C-X-C chemokine CXCL9, CXCL10 and CXCL11 and mediates the proliferation, survival and angiogenic activity of mesangial cells through a heterotrimeric G-protein signaling pathway. Probably promotes cell chemotaxis response. Binds to CCL21. Upon activation by PF4, induces activated T-lymphocytes migration mediated via downstream Ras/extracellular signal-regulated kinase (ERK) signaling. The sequence is that of C-X-C chemokine receptor type 3 (CXCR3) from Canis lupus familiaris (Dog).